Consider the following 284-residue polypeptide: Bifunctional protein FolD 2 (284 aa).

NADP(+) is bound by residues 165 to 167, Thr192, and Val233; that span reads GRG.

This sequence belongs to the tetrahydrofolate dehydrogenase/cyclohydrolase family. As to quaternary structure, homodimer.

The enzyme catalyses (6R)-5,10-methylene-5,6,7,8-tetrahydrofolate + NADP(+) = (6R)-5,10-methenyltetrahydrofolate + NADPH. It catalyses the reaction (6R)-5,10-methenyltetrahydrofolate + H2O = (6R)-10-formyltetrahydrofolate + H(+). It functions in the pathway one-carbon metabolism; tetrahydrofolate interconversion. Its function is as follows. Catalyzes the oxidation of 5,10-methylenetetrahydrofolate to 5,10-methenyltetrahydrofolate and then the hydrolysis of 5,10-methenyltetrahydrofolate to 10-formyltetrahydrofolate. The polypeptide is Bifunctional protein FolD 2 (Streptomyces avermitilis (strain ATCC 31267 / DSM 46492 / JCM 5070 / NBRC 14893 / NCIMB 12804 / NRRL 8165 / MA-4680)).